Here is a 579-residue protein sequence, read N- to C-terminus: Folliculin (579 aa).

Residues 32–82 are disordered; that stretch reads GAGSGDGAGRGEPADEEEGGIQMSSRIRAHSPAEGASAESSSPGPKKSDMC. Residues Ser-62 and Ser-73 each carry the phosphoserine modification. A compositionally biased stretch (low complexity) spans 63 to 76; that stretch reads PAEGASAESSSPGP. The region spanning 86–242 is the uDENN FLCN/SMCR8-type domain; sequence RSLAAGHPGY…RNGNAARSLT (157 aa). Residues 285 to 309 are a coiled coil; that stretch reads QMEQLAELEEESESWDNSEAEEEEK. Residues 294-308 show a composition bias toward acidic residues; that stretch reads EESESWDNSEAEEEE. The tract at residues 294–321 is disordered; it reads EESESWDNSEAEEEEKGPALPEGAEGRE. Phosphoserine occurs at positions 302, 406, 537, 542, and 571. Residues 339–491 form the cDENN FLCN/SMCR8-type domain; the sequence is QPRKLSVFKS…ILNKMEAALT (153 aa). One can recognise a dDENN FLCN/SMCR8-type domain in the interval 493-558; sequence QNLSVDVVDQ…LLKFWMTGLS (66 aa).

This sequence belongs to the folliculin family. In terms of assembly, interacts (via C-terminus) with FNIP1 or FNIP2 (via C-terminus). Component of the lysosomal folliculin complex (LFC), composed of FLCN, FNIP1 (or FNIP2), RagA/RRAGA or RagB/RRAGB GDP-bound, RagC/RRAGC or RagD/RRAGD GTP-bound, and Ragulator. Interaction with FNIP1 or FNIP2 mediates indirect interaction with the PRKAA1, PRKAB1 and PRKAG1 subunits of 5'-AMP-activated protein kinase (AMPK). Interacts with HSP90AA1 in the presence of FNIP1. Interacts with HSP70, STUB1, CDC37, AHSA1, CCT2, STIP1, PTGES3 and PPP5C. Interacts with GABARAP; interaction takes place in the presence of FNIP1 and/or FNIP2. Interacts with RILP; the interaction is direct and promotes association between RILP and RAB34. Interacts with KIF3A and KIF3B. Interacts with lactate dehydrogenase LDHA, but not LDHB; the interaction is direct, may preferentially bind LDHA dimers rather than tetramers, and regulates LDHA activity, acting as an uncompetitive inhibitor. Post-translationally, phosphorylation by ULK1 modulates the interaction with GABARAP and is required to regulate autophagy.

It is found in the lysosome membrane. The protein localises to the cytoplasm. The protein resides in the cytosol. It localises to the cell projection. Its subcellular location is the cilium. It is found in the cytoskeleton. The protein localises to the microtubule organizing center. The protein resides in the centrosome. It localises to the spindle. Its subcellular location is the nucleus. Its activity is regulated as follows. GTPase-activating activity is inhibited in the folliculin complex (LFC), which stabilizes the GDP-bound state of RagA/RRAGA (or RagB/RRAGB), because Arg-164 is located far from the RagC/RRAGC or RagD/RRAGD nucleotide pocket. Disassembly of the LFC complex upon amino acid restimulation liberates the GTPase-activating activity. Its function is as follows. Multi-functional protein, involved in both the cellular response to amino acid availability and in the regulation of glycolysis. GTPase-activating protein that plays a key role in the cellular response to amino acid availability through regulation of the non-canonical mTORC1 signaling cascade controlling the MiT/TFE factors TFEB and TFE3. Activates mTORC1 by acting as a GTPase-activating protein: specifically stimulates GTP hydrolysis by RagC/RRAGC or RagD/RRAGD, promoting the conversion to the GDP-bound state of RagC/RRAGC or RagD/RRAGD, and thereby activating the kinase activity of mTORC1. The GTPase-activating activity is inhibited during starvation and activated in presence of nutrients. Acts as a key component for non-canonical mTORC1-dependent control of the MiT/TFE factors TFEB and TFE3, while it is not involved in mTORC1-dependent phosphorylation of canonical RPS6KB1/S6K1 and EIF4EBP1/4E-BP1. In low-amino acid conditions, the lysosomal folliculin complex (LFC) is formed on the membrane of lysosomes, which inhibits the GTPase-activating activity of FLCN, inactivates mTORC1 and maximizes nuclear translocation of TFEB and TFE3. Upon amino acid restimulation, RagA/RRAGA (or RagB/RRAGB) nucleotide exchange promotes disassembly of the LFC complex and liberates the GTPase-activating activity of FLCN, leading to activation of mTORC1 and subsequent cytoplasmic retention of TFEB and TFE3. Indirectly acts as a positive regulator of Wnt signaling by promoting mTOR-dependent cytoplasmic retention of MiT/TFE factor TFE3. Required for the exit of hematopoietic stem cell from pluripotency by promoting mTOR-dependent cytoplasmic retention of TFE3, thereby increasing Wnt signaling. Involved in the control of embryonic stem cells differentiation; together with LAMTOR1 it is necessary to recruit and activate RagC/RRAGC and RagD/RRAGD at the lysosomes, and to induce exit of embryonic stem cells from pluripotency via non-canonical, mTOR-independent TFE3 inactivation. Acts as an inhibitor of browning of adipose tissue by regulating mTOR-dependent cytoplasmic retention of TFE3. In response to flow stress, regulates STK11/LKB1 accumulation and mTORC1 activation through primary cilia: may act by recruiting STK11/LKB1 to primary cilia for activation of AMPK resided at basal bodies, causing mTORC1 down-regulation. Together with FNIP1 and/or FNIP2, regulates autophagy: following phosphorylation by ULK1, interacts with GABARAP and promotes autophagy. Required for starvation-induced perinuclear clustering of lysosomes by promoting association of RILP with its effector RAB34. Regulates glycolysis by binding to lactate dehydrogenase LDHA, acting as an uncompetitive inhibitor. The chain is Folliculin from Bos taurus (Bovine).